A 376-amino-acid chain; its full sequence is Serine/threonine-protein kinase-transforming protein mos (376 aa).

The 283-residue stretch at 94–376 folds into the Protein kinase domain; it reads VCLMHRLGSG…KALADSIEPM (283 aa). Residues 100–108 and lysine 121 each bind ATP; that span reads LGSGGFGSV. Aspartate 229 acts as the Proton acceptor in catalysis.

The protein belongs to the protein kinase superfamily. Ser/Thr protein kinase family.

It carries out the reaction L-seryl-[protein] + ATP = O-phospho-L-seryl-[protein] + ADP + H(+). The catalysed reaction is L-threonyl-[protein] + ATP = O-phospho-L-threonyl-[protein] + ADP + H(+). This chain is Serine/threonine-protein kinase-transforming protein mos (V-MOS), found in Moloney murine sarcoma virus (strain m1) (MoMSV).